The primary structure comprises 463 residues: NADH dehydrogenase [ubiquinone] iron-sulfur protein 2, mitochondrial (463 aa).

The transit peptide at 1–33 (MAALRALGGLRGVAAQVLRPGAGVRLPIQPSRG) directs the protein to the mitochondrion. Position 62 is an N6-acetyllysine (lysine 62). Position 118 is a symmetric dimethylarginine (arginine 118). The [4Fe-4S] cluster site is built by cysteine 326, cysteine 332, and cysteine 347.

This sequence belongs to the complex I 49 kDa subunit family. Core subunit of respiratory chain NADH dehydrogenase (Complex I) which is composed of 45 different subunits. Component of the iron-sulfur (IP) fragment of the enzyme. Interacts with NDUFAF3. Interacts with NDUFAF7. Interacts with CERS2. The cofactor is [4Fe-4S] cluster. Post-translationally, dimethylation at Arg-118 by NDUFAF7 takes place after NDUFS2 assembles into the complex I, leading to stabilize the early intermediate complex.

It is found in the mitochondrion inner membrane. The catalysed reaction is a ubiquinone + NADH + 5 H(+)(in) = a ubiquinol + NAD(+) + 4 H(+)(out). Core subunit of the mitochondrial membrane respiratory chain NADH dehydrogenase (Complex I) which catalyzes electron transfer from NADH through the respiratory chain, using ubiquinone as an electron acceptor. Essential for the catalytic activity and assembly of complex I. Redox-sensitive, critical component of the oxygen-sensing pathway in the pulmonary vasculature which plays a key role in acute pulmonary oxygen-sensing and hypoxic pulmonary vasoconstriction. Plays an important role in carotid body sensing of hypoxia. Essential for glia-like neural stem and progenitor cell proliferation, differentiation and subsequent oligodendrocyte or neuronal maturation. This chain is NADH dehydrogenase [ubiquinone] iron-sulfur protein 2, mitochondrial (NDUFS2), found in Pongo pygmaeus (Bornean orangutan).